Here is a 1604-residue protein sequence, read N- to C-terminus: Ubiquitin carboxyl-terminal hydrolase 32 (1604 aa).

EF-hand domains are found at residues 91–126, 228–263, and 264–299; these read KDEEKAKYIFSLFSSESGNYVIREEMERMLHVVDGK, IRPSLSEGLFNAFDENRDNHIDFKEISCGLSACCRG, and PLAERQKFCFKVFDVDRDGVLSRVELRDMVVALLEV. 9 residues coordinate Ca(2+): aspartate 241, asparagine 243, aspartate 245, histidine 247, glutamate 252, aspartate 277, aspartate 279, aspartate 281, and glutamate 288. The DUSP domain occupies 369 to 585; that stretch reads ATPEEEGQII…ANLALPRPVI (217 aa). One can recognise a USP domain in the interval 734-1567; that stretch reads TGLSNLGNTC…SAYILFYEQQ (834 aa). Residue cysteine 743 is the Nucleophile of the active site. Tyrosine 1173 carries the post-translational modification Phosphotyrosine. 2 disordered regions span residues 1343–1362 and 1367–1431; these read KKVDAQSSAGEEDVLLSKSP and ANII…DASK. Phosphoserine occurs at positions 1350, 1372, 1376, and 1454. Residues 1367–1399 show a composition bias toward low complexity; it reads ANIISSPKGSPSSSRKSGTSCPSSKNSSPNSSP. The active-site Proton acceptor is the histidine 1526. Residue serine 1588 is modified to Phosphoserine. Cysteine 1601 carries the post-translational modification Cysteine methyl ester. Cysteine 1601 carries the S-farnesyl cysteine lipid modification. The propeptide at 1602–1604 is removed in mature form; it reads VLQ.

Belongs to the peptidase C19 family.

It is found in the golgi apparatus membrane. The enzyme catalyses Thiol-dependent hydrolysis of ester, thioester, amide, peptide and isopeptide bonds formed by the C-terminal Gly of ubiquitin (a 76-residue protein attached to proteins as an intracellular targeting signal).. In terms of biological role, deubiquitinase that can remove conjugated ubiquitin from target proteins, such as RAB7A and LAMTOR1. Acts as a positive regulator of the mTORC1 signaling by mediating deubiquitination of LAMTOR1, thereby promoting the association between LAMTOR1 and the lysosomal V-ATPase complex and subsequent activation of the mTORC1 complex. The sequence is that of Ubiquitin carboxyl-terminal hydrolase 32 (USP32) from Homo sapiens (Human).